A 585-amino-acid chain; its full sequence is Bestrophin-1 (585 aa).

Residues 1–31 lie on the Cytoplasmic side of the membrane; sequence MTITYTSQVANARLGSFSRLLLCWRGSIYKL. Alanine 10 is a binding site for Ca(2+). A helical transmembrane segment spans residues 32-51; the sequence is LYGEFLIFLLCYYIIRFIYR. The Extracellular portion of the chain corresponds to 52-60; sequence LALTEEQQL. Residues 61–82 traverse the membrane as a helical segment; that stretch reads MFEKLTLYCDSYIQLIPISFVL. At 83–237 the chain is on the cytoplasmic side; it reads GFYVTLVVTR…DWISIPLVYT (155 aa). A helical transmembrane segment spans residues 238–255; that stretch reads QVVTVAVYSFFLTCLVGR. The Extracellular portion of the chain corresponds to 256–274; that stretch reads QFLNPAKAYPGHELDLVVP. A helical transmembrane segment spans residues 275–288; sequence VFTFLQFFFYVGWL. The Cytoplasmic segment spans residues 289–585; sequence KVAEQLINPF…ALENRDEAHS (297 aa). Residues glutamine 293, asparagine 296, aspartate 301, and aspartate 304 each contribute to the Ca(2+) site. The auto-inhibitory segment stretch occupies residues 346 to 379; sequence PYTAASAQFRRASFMGSTFNISLNKEEMEFQPNQ.

This sequence belongs to the anion channel-forming bestrophin (TC 1.A.46) family. Calcium-sensitive chloride channel subfamily. In terms of assembly, interacts with YWHAG; this interaction promotes the ligand-gated L-glutamate channel activity leading to the positive regulation of NMDA glutamate receptor activity through the L-glutamate secretion. Predominantly expressed in the basolateral membrane of the retinal pigment epithelium.

It is found in the cell membrane. The protein resides in the basolateral cell membrane. It catalyses the reaction chloride(in) = chloride(out). The catalysed reaction is hydrogencarbonate(in) = hydrogencarbonate(out). The enzyme catalyses 4-aminobutanoate(in) = 4-aminobutanoate(out). It carries out the reaction L-glutamate(out) = L-glutamate(in). Inactivated by sulfhydryl-reactive agents. Its function is as follows. Ligand-gated anion channel that allows the movement of anions across cell membranes when activated by calcium (Ca2+). Allows the movement of chloride and hydrogencarbonate. Found in a partially open conformation leading to significantly smaller chloride movement. Upon F2R/PAR-1 activation, the sequestered calcium is released into the cytosol of astrocytes, leading to the (Ca2+)-dependent release of L-glutamate into the synaptic cleft that targets the neuronal postsynaptic GRIN2A/NMDAR receptor resulting in the synaptic plasticity regulation. Upon activation of the norepinephrine-alpha-1 adrenergic receptor signaling pathway, transports as well D-serine than L-glutamate in a (Ca2+)-dependent manner, leading to activation of adjacent NMDAR receptors and therefore regulates the heterosynaptic long-term depression and metaplasticity during initial memory acquisition. Releases the 4-aminobutanoate neurotransmitter in a (Ca2+)-dependent manner, and participates in its tonic release from cerebellar glial cells. The chain is Bestrophin-1 from Homo sapiens (Human).